A 424-amino-acid chain; its full sequence is Tol-Pal system protein TolB (424 aa).

Residues 1 to 16 (MKQLLVLILSLYTTLA) form the signal peptide.

Belongs to the TolB family. The Tol-Pal system is composed of five core proteins: the inner membrane proteins TolA, TolQ and TolR, the periplasmic protein TolB and the outer membrane protein Pal. They form a network linking the inner and outer membranes and the peptidoglycan layer.

Its subcellular location is the periplasm. Its function is as follows. Part of the Tol-Pal system, which plays a role in outer membrane invagination during cell division and is important for maintaining outer membrane integrity. This Ruthia magnifica subsp. Calyptogena magnifica protein is Tol-Pal system protein TolB.